The following is a 264-amino-acid chain: Indole-3-glycerol phosphate synthase (264 aa).

Belongs to the TrpC family.

It carries out the reaction 1-(2-carboxyphenylamino)-1-deoxy-D-ribulose 5-phosphate + H(+) = (1S,2R)-1-C-(indol-3-yl)glycerol 3-phosphate + CO2 + H2O. It functions in the pathway amino-acid biosynthesis; L-tryptophan biosynthesis; L-tryptophan from chorismate: step 4/5. The chain is Indole-3-glycerol phosphate synthase from Xylella fastidiosa (strain M12).